Consider the following 374-residue polypeptide: Queuine tRNA-ribosyltransferase (374 aa).

Asp89 (proton acceptor) is an active-site residue. Substrate-binding positions include 89-93 (DSGGF), Asp143, Gln187, and Gly214. Residues 245 to 251 (GVGKPED) form an RNA binding region. Asp264 functions as the Nucleophile in the catalytic mechanism. Residues 269-273 (TRNAR) are RNA binding; important for wobble base 34 recognition. Residues Cys302, Cys304, Cys307, and His333 each contribute to the Zn(2+) site.

The protein belongs to the queuine tRNA-ribosyltransferase family. As to quaternary structure, homodimer. Within each dimer, one monomer is responsible for RNA recognition and catalysis, while the other monomer binds to the replacement base PreQ1. The cofactor is Zn(2+).

The catalysed reaction is 7-aminomethyl-7-carbaguanine + guanosine(34) in tRNA = 7-aminomethyl-7-carbaguanosine(34) in tRNA + guanine. It functions in the pathway tRNA modification; tRNA-queuosine biosynthesis. Its function is as follows. Catalyzes the base-exchange of a guanine (G) residue with the queuine precursor 7-aminomethyl-7-deazaguanine (PreQ1) at position 34 (anticodon wobble position) in tRNAs with GU(N) anticodons (tRNA-Asp, -Asn, -His and -Tyr). Catalysis occurs through a double-displacement mechanism. The nucleophile active site attacks the C1' of nucleotide 34 to detach the guanine base from the RNA, forming a covalent enzyme-RNA intermediate. The proton acceptor active site deprotonates the incoming PreQ1, allowing a nucleophilic attack on the C1' of the ribose to form the product. After dissociation, two additional enzymatic reactions on the tRNA convert PreQ1 to queuine (Q), resulting in the hypermodified nucleoside queuosine (7-(((4,5-cis-dihydroxy-2-cyclopenten-1-yl)amino)methyl)-7-deazaguanosine). The chain is Queuine tRNA-ribosyltransferase from Shewanella sp. (strain MR-4).